Reading from the N-terminus, the 306-residue chain is D-alanine--D-alanine ligase (306 aa).

The ATP-grasp domain occupies 100 to 295 (KQIFRRAGLP…FGQLLERLME (196 aa)). 127-180 (RLPYPLFVKSNTGGSSLRLGRARNRAELDDIMGQIFAAGEEVIMEPVLPGREVT) is an ATP binding site. Asp-249, Glu-262, and Asn-264 together coordinate Mg(2+).

This sequence belongs to the D-alanine--D-alanine ligase family. Requires Mg(2+) as cofactor. Mn(2+) is required as a cofactor.

The protein resides in the cytoplasm. The catalysed reaction is 2 D-alanine + ATP = D-alanyl-D-alanine + ADP + phosphate + H(+). It participates in cell wall biogenesis; peptidoglycan biosynthesis. In terms of biological role, cell wall formation. The polypeptide is D-alanine--D-alanine ligase (Desulfovibrio desulfuricans (strain ATCC 27774 / DSM 6949 / MB)).